Here is a 397-residue protein sequence, read N- to C-terminus: Decapping and exoribonuclease protein (397 aa).

The segment covering 1–20 (MESRGTKREAGKIEVAEPRN) has biased composition (basic and acidic residues). Residues 1–37 (MESRGTKREAGKIEVAEPRNKLPRPAPSLPTDPALYS) form a disordered region. Arg58 is a binding site for substrate. The disordered stretch occupies residues 67–88 (LRYYSPPPTNGQSPNFDLRDGY). Substrate contacts are provided by residues Glu101 and 131–133 (WRG). Glu192 serves as a coordination point for Mg(2+). Substrate-binding residues include Cys217 and Glu234. Mg(2+) is bound by residues Glu234, Asp236, Glu253, and Leu254. Residues Lys255 and Gln280 each coordinate substrate. A Phosphothreonine modification is found at Thr392. Ser394 carries the phosphoserine modification.

The protein belongs to the DXO/Dom3Z family. Mg(2+) is required as a cofactor.

The protein resides in the nucleus. It carries out the reaction a 5'-end triphospho-ribonucleoside in mRNA + H2O = a 5'-end phospho-ribonucleoside in mRNA + diphosphate + H(+). The enzyme catalyses a 5'-end NAD(+)-phospho-ribonucleoside in mRNA + H2O = a 5'-end phospho-ribonucleoside in mRNA + NAD(+) + H(+). It catalyses the reaction a 5'-end NAD(+)-phospho-ribonucleoside in snoRNA + H2O = a 5'-end phospho-ribonucleoside in snoRNA + NAD(+) + H(+). The catalysed reaction is a 5'-end (N(7)-methyl 5'-triphosphoguanosine)-ribonucleoside-ribonucleotide in mRNA + H2O = a (N(7)-methyl 5'-triphosphoguanosine)-nucleoside + a 5'-end phospho-ribonucleoside in mRNA + H(+). It carries out the reaction a 5'-end FAD-phospho-ribonucleoside in mRNA + H2O = a 5'-end phospho-ribonucleoside in mRNA + FAD + H(+). The enzyme catalyses a 5'-end CoA-ribonucleoside in mRNA + H2O = 3'-dephospho-CoA + a 5'-end phospho-ribonucleoside in mRNA + H(+). Decapping enzyme for NAD-capped RNAs: specifically hydrolyzes the nicotinamide adenine dinucleotide (NAD) cap from a subset of RNAs by removing the entire NAD moiety from the 5'-end of an NAD-capped RNA. The NAD-cap is present at the 5'-end of some RNAs and snoRNAs. In contrast to the canonical 5'-end N7 methylguanosine (m7G) cap, the NAD cap promotes mRNA decay. Preferentially acts on NAD-capped transcripts in response to environmental stress. Also acts as a non-canonical decapping enzyme that removes the entire cap structure of m7G capped or incompletely capped RNAs and mediates their subsequent degradation. Specifically degrades pre-mRNAs with a defective 5'-end m7G cap and is part of a pre-mRNA capping quality control. Has decapping activity toward incomplete 5'-end m7G cap mRNAs such as unmethylated 5'-end-capped RNA (cap0), while it has no activity toward 2'-O-ribose methylated m7G cap (cap1). In contrast to canonical decapping enzymes DCP2 and NUDT16, which cleave the cap within the triphosphate linkage, the decapping activity releases the entire cap structure GpppN and a 5'-end monophosphate RNA. Also has 5'-3' exoribonuclease activities: The 5'-end monophosphate RNA is then degraded by the 5'-3' exoribonuclease activity, enabling this enzyme to decap and degrade incompletely capped mRNAs. Also possesses RNA 5'-pyrophosphohydrolase activity by hydrolyzing the 5'-end triphosphate to release pyrophosphates. Exhibits decapping activity towards FAD-capped RNAs. Exhibits decapping activity towards dpCoA-capped RNAs in vitro. In Bos taurus (Bovine), this protein is Decapping and exoribonuclease protein.